The following is a 271-amino-acid chain: Shikimate dehydrogenase-like protein HI_0607 (271 aa).

The active-site Proton donor/acceptor is the K67. D103 is a substrate binding site. NADP(+)-binding positions include 126–130 (GSGGM), K154, and S184.

Belongs to the shikimate dehydrogenase-like family. As to quaternary structure, homodimer.

It carries out the reaction shikimate + NADP(+) = 3-dehydroshikimate + NADPH + H(+). Its function is as follows. In vitro, is able to catalyze the NADP(+)-dependent oxidation of shikimate to 3-dehydroshikimate. However, has much lower activity than classical shikimate dehydrogenases AroE, indicating that shikimate may not be the biological substrate. Cannot utilize NAD(+) instead of NADP(+). Is not able to catalyze the oxidation of quinate. This chain is Shikimate dehydrogenase-like protein HI_0607, found in Haemophilus influenzae (strain ATCC 51907 / DSM 11121 / KW20 / Rd).